A 271-amino-acid polypeptide reads, in one-letter code: HTH-type transcriptional repressor AllR (271 aa).

The 63-residue stretch at 21 to 83 (AQALERGIAI…SQLGWWHIGL (63 aa)) folds into the HTH iclR-type domain. The H-T-H motif DNA-binding region spans 43 to 62 (VSDISLNLDLPLSTTFRLLK). In terms of domain architecture, IclR-ED spans 98–267 (VLSVAGPFMR…ARDISTALGL (170 aa)). Glyoxylate-binding positions include 154–156 (SGA), Asp207, Cys217, and 234–236 (SIS).

Its function is as follows. Negative regulator of allantoin and glyoxylate utilization operons. Binds to the gcl promoter and to the allS-allA intergenic region. In Escherichia coli (strain UTI89 / UPEC), this protein is HTH-type transcriptional repressor AllR (allR).